The primary structure comprises 399 residues: Tyrosine--tRNA ligase 2 (399 aa).

Residues 42–51 (PTAPDLHLGH) carry the 'HIGH' region motif. Residues 226-230 (KMSKS) carry the 'KMSKS' region motif. K229 contacts ATP. The 61-residue stretch at 336–396 (MPVASVLNKA…GKKAFARITL (61 aa)) folds into the S4 RNA-binding domain.

It belongs to the class-I aminoacyl-tRNA synthetase family. TyrS type 2 subfamily. In terms of assembly, homodimer.

It is found in the cytoplasm. The catalysed reaction is tRNA(Tyr) + L-tyrosine + ATP = L-tyrosyl-tRNA(Tyr) + AMP + diphosphate + H(+). Functionally, catalyzes the attachment of tyrosine to tRNA(Tyr) in a two-step reaction: tyrosine is first activated by ATP to form Tyr-AMP and then transferred to the acceptor end of tRNA(Tyr). The chain is Tyrosine--tRNA ligase 2 from Pseudomonas aeruginosa (strain ATCC 15692 / DSM 22644 / CIP 104116 / JCM 14847 / LMG 12228 / 1C / PRS 101 / PAO1).